The following is a 469-amino-acid chain: L-seryl-tRNA(Sec) selenium transferase (469 aa).

N6-(pyridoxal phosphate)lysine is present on Lys295.

It belongs to the SelA family. Pyridoxal 5'-phosphate serves as cofactor.

It is found in the cytoplasm. It catalyses the reaction L-seryl-tRNA(Sec) + selenophosphate + H(+) = L-selenocysteinyl-tRNA(Sec) + phosphate. The protein operates within aminoacyl-tRNA biosynthesis; selenocysteinyl-tRNA(Sec) biosynthesis; selenocysteinyl-tRNA(Sec) from L-seryl-tRNA(Sec) (bacterial route): step 1/1. Functionally, converts seryl-tRNA(Sec) to selenocysteinyl-tRNA(Sec) required for selenoprotein biosynthesis. The polypeptide is L-seryl-tRNA(Sec) selenium transferase (Methylocella silvestris (strain DSM 15510 / CIP 108128 / LMG 27833 / NCIMB 13906 / BL2)).